We begin with the raw amino-acid sequence, 362 residues long: S-adenosylmethionine decarboxylase proenzyme (362 aa).

Residues glutamate 13 and glutamate 16 contribute to the active site. The Schiff-base intermediate with substrate; via pyruvic acid role is filled by serine 73. Serine 73 bears the Pyruvic acid (Ser); by autocatalysis mark. Cysteine 87 functions as the Proton donor; for catalytic activity in the catalytic mechanism. Residues serine 236 and histidine 249 each act as proton acceptor; for processing activity in the active site.

It belongs to the eukaryotic AdoMetDC family. It depends on pyruvate as a cofactor. Post-translationally, is synthesized initially as an inactive proenzyme. Formation of the active enzyme involves a self-maturation process in which the active site pyruvoyl group is generated from an internal serine residue via an autocatalytic post-translational modification. Two non-identical subunits are generated from the proenzyme in this reaction, and the pyruvate is formed at the N-terminus of the alpha chain, which is derived from the carboxyl end of the proenzyme. The post-translation cleavage follows an unusual pathway, termed non-hydrolytic serinolysis, in which the side chain hydroxyl group of the serine supplies its oxygen atom to form the C-terminus of the beta chain, while the remainder of the serine residue undergoes an oxidative deamination to produce ammonia and the pyruvoyl group blocking the N-terminus of the alpha chain.

The enzyme catalyses S-adenosyl-L-methionine + H(+) = S-adenosyl 3-(methylsulfanyl)propylamine + CO2. Its pathway is amine and polyamine biosynthesis; S-adenosylmethioninamine biosynthesis; S-adenosylmethioninamine from S-adenosyl-L-methionine: step 1/1. The protein is S-adenosylmethionine decarboxylase proenzyme (SAMDC) of Datura stramonium (Jimsonweed).